The primary structure comprises 108 residues: Movement protein (108 aa).

A disordered region spans residues 1–25 (MDASSQYSALPYPQPPRVPSAAPSA). Residues 35 to 55 (EIVIFTFVSVLALYLLWLWVL) traverse the membrane as a helical segment. The disordered stretch occupies residues 73-108 (LIFGPGERPPVASADGSRPVPDPSPPVRRDLDLSRV). Residues 99–108 (VRRDLDLSRV) show a composition bias toward basic and acidic residues.

It belongs to the mastrevirus movement protein family. In terms of assembly, interacts with the capsid protein (CP). Part of a MP-CP-viral DNA complex.

It is found in the host membrane. In terms of biological role, involved in the viral transport within, and between cells. The chain is Movement protein from Megathyrsus maximus (PanSV).